Reading from the N-terminus, the 602-residue chain is Aspartate--tRNA(Asp/Asn) ligase (602 aa).

L-aspartate is bound at residue E191. Residues 215-218 (QLYK) form an aspartate region. R237 is an L-aspartate binding site. ATP contacts are provided by residues 237 to 239 (RDE) and Q246. H465 contacts L-aspartate. E499 provides a ligand contact to ATP. Position 506 (R506) interacts with L-aspartate. Residue 551-554 (GLDR) participates in ATP binding.

Belongs to the class-II aminoacyl-tRNA synthetase family. Type 1 subfamily. As to quaternary structure, homodimer.

The protein resides in the cytoplasm. The catalysed reaction is tRNA(Asx) + L-aspartate + ATP = L-aspartyl-tRNA(Asx) + AMP + diphosphate. Aspartyl-tRNA synthetase with relaxed tRNA specificity since it is able to aspartylate not only its cognate tRNA(Asp) but also tRNA(Asn). Reaction proceeds in two steps: L-aspartate is first activated by ATP to form Asp-AMP and then transferred to the acceptor end of tRNA(Asp/Asn). This chain is Aspartate--tRNA(Asp/Asn) ligase, found in Treponema pallidum (strain Nichols).